A 332-amino-acid chain; its full sequence is tRNA-dihydrouridine synthase B (332 aa).

FMN-binding positions include 19–21 and Gln73; that span reads PMA. Cys103 acts as the Proton donor in catalysis. Residues Lys142, 203–205, and 227–228 each bind FMN; these read NGD and GR.

Belongs to the Dus family. DusB subfamily. The cofactor is FMN.

It catalyses the reaction a 5,6-dihydrouridine in tRNA + NAD(+) = a uridine in tRNA + NADH + H(+). It carries out the reaction a 5,6-dihydrouridine in tRNA + NADP(+) = a uridine in tRNA + NADPH + H(+). Functionally, catalyzes the synthesis of 5,6-dihydrouridine (D), a modified base found in the D-loop of most tRNAs, via the reduction of the C5-C6 double bond in target uridines. In Pseudomonas aeruginosa (strain ATCC 15692 / DSM 22644 / CIP 104116 / JCM 14847 / LMG 12228 / 1C / PRS 101 / PAO1), this protein is tRNA-dihydrouridine synthase B.